The chain runs to 423 residues: Vitamin D3 receptor (423 aa).

Residues Cys-24, Cys-27, Cys-41, Cys-44, Cys-60, Cys-66, Cys-76, and Cys-79 each coordinate Zn(2+). NR C4-type zinc fingers lie at residues 24–44 and 60–84; these read CGVC…CEGC and CPFN…LKRC. Positions 24–89 form a DNA-binding region, nuclear receptor; it reads CGVCGDRATG…RLKRCVDIGM (66 aa). A hinge region spans residues 97-126; the sequence is DEEVQRKREMIMKRKEEEALKDSLRPKLSE. One can recognise an NR LBD domain in the interval 127–419; the sequence is EQQHIIAILL…LTPLVLEVFG (293 aa). A calcitriol-binding site is contributed by Tyr-143. Residues 159–180 form a disordered region; sequence MDGSTGSYSPRPTLSFSGNSSS. A compositionally biased stretch (low complexity) spans 171 to 180; that stretch reads TLSFSGNSSS. Ser-233 contributes to the calcitriol binding site. The tract at residues 242–260 is interaction with coactivator LXXLL motif; the sequence is KMIPGFRDLTSDDQIVLLK. Residues Arg-270, Ser-274, His-301, and His-393 each coordinate calcitriol. Residues 412 to 420 carry the 9aaTAD motif; the sequence is PLVLEVFGN.

The protein belongs to the nuclear hormone receptor family. NR1 subfamily. As to quaternary structure, homodimer in the absence of bound vitamin D3. Heterodimer with RXRA after vitamin D3 binding. Interacts with MED1 and NCOA6. Interacts with MED1, NCOA1, NCOA2, NCOA3 and NCOA6 coactivators, leading to a strong increase of transcription of target genes. Interacts with the corepressor NCOR1. Interacts with SNW1. Interacts with IRX4, the interaction does not affect its transactivation activity. Interacts with CRY1. Interacts with CRY2 in a ligand-dependent manner. Ubiquitinated by UBR5, leading to its degradation: UBR5 specifically recognizes and binds ligand-bound VDR when it is not associated with coactivators (NCOAs). In presence of NCOAs, the UBR5-degron is not accessible, preventing its ubiquitination and degradation. Detected in intestine and kidney.

It is found in the nucleus. The protein localises to the cytoplasm. Its function is as follows. Nuclear receptor for calcitriol, the active form of vitamin D3 which mediates the action of this vitamin on cells. Enters the nucleus upon vitamin D3 binding where it forms heterodimers with the retinoid X receptor/RXR. The VDR-RXR heterodimers bind to specific response elements on DNA and activate the transcription of vitamin D3-responsive target genes. Plays a central role in calcium homeostasis. Also functions as a receptor for the secondary bile acid lithocholic acid (LCA) and its metabolites. In Rattus norvegicus (Rat), this protein is Vitamin D3 receptor (Vdr).